The following is a 92-amino-acid chain: Alpha-elapitoxin-As2a (92 aa).

An N-terminal signal peptide occupies residues 1–21 (MKTLLLTLVVVTIVCLDLGDG). Intrachain disulfides connect C24-C41, C34-C62, C47-C51, C66-C77, and C78-C83.

It belongs to the three-finger toxin family. Long-chain subfamily. Type II alpha-neurotoxin sub-subfamily. Expressed by the venom gland.

Its subcellular location is the secreted. Its function is as follows. Binds with high affinity to muscular (alpha-1/CHRNA1) and neuronal (alpha-7/CHRNA7) nicotinic acetylcholine receptor (nAChR) and inhibits acetylcholine from binding to the receptor, thereby impairing neuromuscular and neuronal transmission. In Austrelaps superbus (Lowland copperhead snake), this protein is Alpha-elapitoxin-As2a.